A 200-amino-acid chain; its full sequence is Recombination protein RecR (200 aa).

Residues Cys57–Cys72 form a C4-type zinc finger. One can recognise a Toprim domain in the interval Gly81–Pro176.

The protein belongs to the RecR family.

Functionally, may play a role in DNA repair. It seems to be involved in an RecBC-independent recombinational process of DNA repair. It may act with RecF and RecO. In Aliivibrio salmonicida (strain LFI1238) (Vibrio salmonicida (strain LFI1238)), this protein is Recombination protein RecR.